Here is a 104-residue protein sequence, read N- to C-terminus: Fusaric acid biosynthesis protein 2 (104 aa).

This sequence belongs to the YciI family.

The protein operates within mycotoxin biosynthesis. Functionally, part of the gene cluster that mediates the biosynthesis of fusaric acid, a mycotoxin with low to moderate toxicity to animals and humans, but with high phytotoxic properties. L-aspartate is suggested as fusaric acid amino acid precursor that is activated and further processed to O-acetyl-L-homoserine by cluster enzymes aspartate kinase FUB3 and homoserine O-acetyltransferase FUB5, as well as enzymes of the primary metabolism. The polyketide synthase (PKS) FUB1 generates the triketide trans-2-hexenal which is presumptively released by the hydrolase FUB4 and linked to the NRPS-bound amino acid precursor by NAD(P)-dependent dehydrogenase FUB6. FUB1, FUB4, and the non-canonical NRPS Fub8 may form an enzyme complex. Further processing of the NRPS-bound intermediate might be carried out by FUB6 and the sulfhydrylase FUB7, enabling a spontaneous electrocyclization to close the carbon backbone of fusaric acid. Dihydrofusaric acid is likely to be released via reduction by the thioester reductase (TR) domain of FUB8 whereupon the final oxidation to fusaric acid may (also) be performed by the FMN-dependent dehydrogenase FUB9. This Gibberella fujikuroi (strain CBS 195.34 / IMI 58289 / NRRL A-6831) (Bakanae and foot rot disease fungus) protein is Fusaric acid biosynthesis protein 2.